The sequence spans 211 residues: uncharacterized protein (211 aa).

4 consecutive transmembrane segments (helical) span residues 77-97 (FLMF…AITI), 113-133 (GISV…VLIG), 152-172 (ILIS…NVIP), and 179-199 (LLTP…PLFG).

The protein localises to the cell membrane. This is an uncharacterized protein from Bacillus subtilis (strain 168).